Reading from the N-terminus, the 77-residue chain is Cold shock protein YdfK (77 aa).

To E.coli YnaE.

The chain is Cold shock protein YdfK (ydfK) from Escherichia coli (strain K12).